The primary structure comprises 77 residues: Vacuolar ATPase assembly integral membrane protein VMA21 (77 aa).

The Cytoplasmic portion of the chain corresponds to 1–8 (MAVDVPTS). Residues 9–29 (VIVKLMFFTLAMVSFPVLTFF) traverse the membrane as a helical segment. The Lumenal segment spans residues 30 to 41 (VSQQYTSNTLVN). The helical transmembrane segment at 42–62 (GGLAALAANVVLFAYVIMAFS) threads the bilayer. Over 63-77 (EDVPQSDGKESKKQQ) the chain is Cytoplasmic. The Prevents secretion from ER motif lies at 74 to 77 (KKQQ).

This sequence belongs to the VMA21 family.

It is found in the endoplasmic reticulum membrane. Its subcellular location is the endoplasmic reticulum-Golgi intermediate compartment membrane. It localises to the cytoplasmic vesicle. The protein resides in the COPII-coated vesicle membrane. Functionally, required for the assembly of the V0 complex of the vacuolar ATPase (V-ATPase) in the endoplasmic reticulum. The protein is Vacuolar ATPase assembly integral membrane protein VMA21 of Eremothecium gossypii (strain ATCC 10895 / CBS 109.51 / FGSC 9923 / NRRL Y-1056) (Yeast).